The chain runs to 402 residues: Tyrosine--tRNA ligase (402 aa).

The 'HIGH' region signature appears at 47–56 (PTAPDLHLGH). Residues 232–236 (KMSKS) carry the 'KMSKS' region motif. Lysine 235 lines the ATP pocket. One can recognise an S4 RNA-binding domain in the interval 341-401 (VGVLDVLKQI…GKKRFMKLNI (61 aa)).

It belongs to the class-I aminoacyl-tRNA synthetase family. TyrS type 2 subfamily. In terms of assembly, homodimer.

It localises to the cytoplasm. The enzyme catalyses tRNA(Tyr) + L-tyrosine + ATP = L-tyrosyl-tRNA(Tyr) + AMP + diphosphate + H(+). Its function is as follows. Catalyzes the attachment of tyrosine to tRNA(Tyr) in a two-step reaction: tyrosine is first activated by ATP to form Tyr-AMP and then transferred to the acceptor end of tRNA(Tyr). The chain is Tyrosine--tRNA ligase from Helicobacter pylori (strain J99 / ATCC 700824) (Campylobacter pylori J99).